The following is a 64-amino-acid chain: uncharacterized protein (64 aa).

The interval 1 to 64 is disordered; that stretch reads MMITRGWEGW…LDPAISRSSS (64 aa). Residues 16-28 show a composition bias toward gly residues; the sequence is RGAGTGTGLGGPG.

This is an uncharacterized protein from Homo sapiens (Human).